The sequence spans 368 residues: Alanine racemase (368 aa).

Catalysis depends on Lys-35, which acts as the Proton acceptor; specific for D-alanine. Lys-35 is modified (N6-(pyridoxal phosphate)lysine). A substrate-binding site is contributed by Arg-130. Catalysis depends on Tyr-253, which acts as the Proton acceptor; specific for L-alanine. Met-305 contacts substrate.

This sequence belongs to the alanine racemase family. Pyridoxal 5'-phosphate serves as cofactor.

It catalyses the reaction L-alanine = D-alanine. It functions in the pathway amino-acid biosynthesis; D-alanine biosynthesis; D-alanine from L-alanine: step 1/1. Its function is as follows. Catalyzes the interconversion of L-alanine and D-alanine. May also act on other amino acids. This chain is Alanine racemase (alr), found in Cupriavidus metallidurans (strain ATCC 43123 / DSM 2839 / NBRC 102507 / CH34) (Ralstonia metallidurans).